Reading from the N-terminus, the 459-residue chain is Glycosyl hydrolase family 109 protein (459 aa).

Residues 1–31 (MHNIHRRNFLKAAGAATAGLVTANIALSAYA) constitute a signal peptide (tat-type signal). Residues 64 to 65 (ER), Asp86, 135 to 138 (WEWH), 155 to 156 (EV), and Asn184 contribute to the NAD(+) site. Residues Tyr213, Arg232, 244-247 (YPTH), and Tyr326 contribute to the substrate site. An NAD(+)-binding site is contributed by Tyr244.

Belongs to the Gfo/Idh/MocA family. Glycosyl hydrolase 109 subfamily. It depends on NAD(+) as a cofactor. Post-translationally, predicted to be exported by the Tat system. The position of the signal peptide cleavage has not been experimentally proven.

Functionally, glycosidase. This is Glycosyl hydrolase family 109 protein from Shewanella baltica (strain OS185).